The primary structure comprises 149 residues: uncharacterized protein (149 aa).

This is an uncharacterized protein from Caenorhabditis elegans.